A 254-amino-acid polypeptide reads, in one-letter code: 5'-nucleotidase SurE (254 aa).

The a divalent metal cation site is built by D8, D9, S38, and N91.

This sequence belongs to the SurE nucleotidase family. A divalent metal cation serves as cofactor.

The protein localises to the cytoplasm. It carries out the reaction a ribonucleoside 5'-phosphate + H2O = a ribonucleoside + phosphate. Nucleotidase that shows phosphatase activity on nucleoside 5'-monophosphates. The polypeptide is 5'-nucleotidase SurE (Anaeromyxobacter sp. (strain K)).